A 142-amino-acid polypeptide reads, in one-letter code: Large ribosomal subunit protein uL11 (142 aa).

It belongs to the universal ribosomal protein uL11 family. As to quaternary structure, part of the ribosomal stalk of the 50S ribosomal subunit. Interacts with L10 and the large rRNA to form the base of the stalk. L10 forms an elongated spine to which L12 dimers bind in a sequential fashion forming a multimeric L10(L12)X complex. Post-translationally, one or more lysine residues are methylated.

Its function is as follows. Forms part of the ribosomal stalk which helps the ribosome interact with GTP-bound translation factors. The sequence is that of Large ribosomal subunit protein uL11 from Yersinia pseudotuberculosis serotype O:1b (strain IP 31758).